Here is a 339-residue protein sequence, read N- to C-terminus: Ferrochelatase (339 aa).

Fe cation is bound by residues His202 and Glu283.

Belongs to the ferrochelatase family.

The protein localises to the cytoplasm. It carries out the reaction heme b + 2 H(+) = protoporphyrin IX + Fe(2+). It participates in porphyrin-containing compound metabolism; protoheme biosynthesis; protoheme from protoporphyrin-IX: step 1/1. In terms of biological role, catalyzes the ferrous insertion into protoporphyrin IX. The sequence is that of Ferrochelatase from Psychrobacter cryohalolentis (strain ATCC BAA-1226 / DSM 17306 / VKM B-2378 / K5).